A 486-amino-acid chain; its full sequence is Malonate-semialdehyde dehydrogenase 1 (486 aa).

The NAD(+) site is built by Phe-154, Lys-178, Glu-181, Arg-182, and Ser-231. Cys-286 functions as the Nucleophile in the catalytic mechanism. Residue Glu-386 coordinates NAD(+).

This sequence belongs to the aldehyde dehydrogenase family. IolA subfamily. As to quaternary structure, homotetramer.

The catalysed reaction is 3-oxopropanoate + NAD(+) + CoA + H2O = hydrogencarbonate + acetyl-CoA + NADH + H(+). It catalyses the reaction 2-methyl-3-oxopropanoate + NAD(+) + CoA + H2O = propanoyl-CoA + hydrogencarbonate + NADH + H(+). It participates in polyol metabolism; myo-inositol degradation into acetyl-CoA; acetyl-CoA from myo-inositol: step 7/7. In terms of biological role, catalyzes the oxidation of malonate semialdehyde (MSA) and methylmalonate semialdehyde (MMSA) into acetyl-CoA and propanoyl-CoA, respectively. Is involved in a myo-inositol catabolic pathway. Bicarbonate, and not CO2, is the end-product of the enzymatic reaction. The protein is Malonate-semialdehyde dehydrogenase 1 of Bacillus anthracis.